We begin with the raw amino-acid sequence, 206 residues long: Small ribosomal subunit protein uS4 (206 aa).

The 61-residue stretch at 96–156 (GRLDNVVYRM…EKAKKQARIK (61 aa)) folds into the S4 RNA-binding domain.

It belongs to the universal ribosomal protein uS4 family. Part of the 30S ribosomal subunit. Contacts protein S5. The interaction surface between S4 and S5 is involved in control of translational fidelity.

In terms of biological role, one of the primary rRNA binding proteins, it binds directly to 16S rRNA where it nucleates assembly of the body of the 30S subunit. With S5 and S12 plays an important role in translational accuracy. This chain is Small ribosomal subunit protein uS4, found in Aeromonas hydrophila subsp. hydrophila (strain ATCC 7966 / DSM 30187 / BCRC 13018 / CCUG 14551 / JCM 1027 / KCTC 2358 / NCIMB 9240 / NCTC 8049).